We begin with the raw amino-acid sequence, 61 residues long: Small ribosomal subunit protein uS14B (61 aa).

Zn(2+)-binding residues include Cys24, Cys27, Cys40, and Cys43.

Belongs to the universal ribosomal protein uS14 family. Zinc-binding uS14 subfamily. Part of the 30S ribosomal subunit. Contacts proteins S3 and S10. Zn(2+) is required as a cofactor.

Its function is as follows. Binds 16S rRNA, required for the assembly of 30S particles and may also be responsible for determining the conformation of the 16S rRNA at the A site. The polypeptide is Small ribosomal subunit protein uS14B (Streptococcus pyogenes serotype M6 (strain ATCC BAA-946 / MGAS10394)).